Here is a 416-residue protein sequence, read N- to C-terminus: Elongation factor 1-gamma 3 (416 aa).

Positions 1-82 (MALVLHCGSG…YVARLKDNSS (82 aa)) constitute a GST N-terminal domain. Residues 87 to 215 (SLIDYSHIEQ…FKQAESVPPV (129 aa)) form the GST C-terminal domain. A disordered region spans residues 213–263 (PPVQKKAAPPKESKAKEAKKEAPKEAPKPKVEASEEEEAPKPKPKNPLDLL). Over residues 221–245 (PPKESKAKEAKKEAPKEAPKPKVEA) the composition is skewed to basic and acidic residues. Residues 256–416 (PKNPLDLLPP…EDLLDAKCFK (161 aa)) enclose the EF-1-gamma C-terminal domain.

As to quaternary structure, EF-1 is composed of four subunits: alpha, beta, delta, and gamma.

In terms of biological role, probably plays a role in anchoring the complex to other cellular components. The protein is Elongation factor 1-gamma 3 of Oryza sativa subsp. japonica (Rice).